Here is a 207-residue protein sequence, read N- to C-terminus: Pyridoxal 5'-phosphate synthase subunit PdxT (207 aa).

51-53 serves as a coordination point for L-glutamine; sequence GES. Cys-83 (nucleophile) is an active-site residue. L-glutamine contacts are provided by residues Arg-112 and 143–144; that span reads IR. Active-site charge relay system residues include His-184 and Glu-186.

This sequence belongs to the glutaminase PdxT/SNO family. In terms of assembly, in the presence of PdxS, forms a dodecamer of heterodimers. Only shows activity in the heterodimer.

It catalyses the reaction aldehydo-D-ribose 5-phosphate + D-glyceraldehyde 3-phosphate + L-glutamine = pyridoxal 5'-phosphate + L-glutamate + phosphate + 3 H2O + H(+). The catalysed reaction is L-glutamine + H2O = L-glutamate + NH4(+). It functions in the pathway cofactor biosynthesis; pyridoxal 5'-phosphate biosynthesis. Functionally, catalyzes the hydrolysis of glutamine to glutamate and ammonia as part of the biosynthesis of pyridoxal 5'-phosphate. The resulting ammonia molecule is channeled to the active site of PdxS. The polypeptide is Pyridoxal 5'-phosphate synthase subunit PdxT (Kineococcus radiotolerans (strain ATCC BAA-149 / DSM 14245 / SRS30216)).